A 521-amino-acid chain; its full sequence is GMP synthase [glutamine-hydrolyzing] (521 aa).

Residues 8-203 (KILILDFGAQ…VVDICGCQTL (196 aa)) form the Glutamine amidotransferase type-1 domain. The active-site Nucleophile is the Cys-85. Catalysis depends on residues His-177 and Glu-179. The GMPS ATP-PPase domain maps to 204-396 (WTAANIIDDQ…LGLPRTMVYR (193 aa)). 231–237 (SGGVDSS) contacts ATP.

As to quaternary structure, homodimer.

It catalyses the reaction XMP + L-glutamine + ATP + H2O = GMP + L-glutamate + AMP + diphosphate + 2 H(+). Its pathway is purine metabolism; GMP biosynthesis; GMP from XMP (L-Gln route): step 1/1. In terms of biological role, catalyzes the synthesis of GMP from XMP. This is GMP synthase [glutamine-hydrolyzing] from Xanthomonas oryzae pv. oryzae (strain PXO99A).